Consider the following 160-residue polypeptide: Cytochrome b6-f complex subunit 4 (160 aa).

3 consecutive transmembrane segments (helical) span residues 36 to 56, 95 to 115, and 131 to 151; these read LLYIFPVVILGTIACNVGLAV, LLGVLLMVSVPTGLLTVPFLE, and TVFLIGTAVALWLGIGATLPI.

The protein belongs to the cytochrome b family. PetD subfamily. In terms of assembly, the 4 large subunits of the cytochrome b6-f complex are cytochrome b6, subunit IV (17 kDa polypeptide, petD), cytochrome f and the Rieske protein, while the 4 small subunits are petG, petL, petM and petN. The complex functions as a dimer.

It is found in the plastid. It localises to the chloroplast thylakoid membrane. In terms of biological role, component of the cytochrome b6-f complex, which mediates electron transfer between photosystem II (PSII) and photosystem I (PSI), cyclic electron flow around PSI, and state transitions. This is Cytochrome b6-f complex subunit 4 from Oryza sativa (Rice).